A 341-amino-acid polypeptide reads, in one-letter code: MSSITETFGVRIDATNSLVQAAIYGFLLAGVAAFAAPIVSTIRVLLSLFVLPGKSLSSFGPRGTWALITGASDGIGKEFALALAAKGYNLILVSRTQSKLDSLAADISSKYGPKISTKTLAMDFAQNKDSDYNNLKKLVDGLDVSILINNVGLSHSIPVPFAETPKQEMTDIIMINCMATLRVTQLLTPGMISRKRGLILTMASFGGFFPTPLLATYSGSKAFLQQWSSALGSELEPHGVHVQCVQSHLITTAMSKIRKPSALVPNPKQFVKATLSKLGRSGGAQNVAFTSTPYWSHGIMQWFLSRFLGERSPIVVKINRGMHEDIRRRALRKAERDAKKQ.

The chain crosses the membrane as a helical span at residues 22–42; sequence AIYGFLLAGVAAFAAPIVSTI. Residues Leu67, Asp123, Asp131, Asn150, Tyr217, Lys221, Ile250, and Thr252 each contribute to the NADP(+) site. The Proton donor role is filled by Tyr217. Lys221 serves as the catalytic Lowers pKa of active site Tyr.

The protein belongs to the short-chain dehydrogenases/reductases (SDR) family.

The protein localises to the endoplasmic reticulum membrane. The catalysed reaction is a very-long-chain (3R)-3-hydroxyacyl-CoA + NADP(+) = a very-long-chain 3-oxoacyl-CoA + NADPH + H(+). It participates in lipid metabolism; fatty acid biosynthesis. Functionally, component of the microsomal membrane bound fatty acid elongation system, which produces the 26-carbon very long-chain fatty acids (VLCFA) from palmitate. Catalyzes the reduction of the 3-ketoacyl-CoA intermediate that is formed in each cycle of fatty acid elongation. VLCFAs serve as precursors for ceramide and sphingolipids. The polypeptide is Very-long-chain 3-oxoacyl-CoA reductase (Phaeosphaeria nodorum (strain SN15 / ATCC MYA-4574 / FGSC 10173) (Glume blotch fungus)).